The following is a 699-amino-acid chain: Dymeclin (699 aa).

A lipid anchor (N-myristoyl glycine) is attached at Gly2. A Phosphoserine modification is found at Ser346.

It belongs to the dymeclin family.

In Drosophila melanogaster (Fruit fly), this protein is Dymeclin.